Here is a 138-residue protein sequence, read N- to C-terminus: MATLQCRIVSAREELYSGEISMLIASGTEGEIGILPGHTPLITLLKPGAMRVQTSNGEEEVIYVSGGVLEVQPKMVTVLADTAMRAHNLDESKIVEARKKAEQMLVNQSDTVQINAALASLAESVAQLQTIRKYKNRA.

This sequence belongs to the ATPase epsilon chain family. In terms of assembly, F-type ATPases have 2 components, CF(1) - the catalytic core - and CF(0) - the membrane proton channel. CF(1) has five subunits: alpha(3), beta(3), gamma(1), delta(1), epsilon(1). CF(0) has three main subunits: a, b and c.

Its subcellular location is the cell inner membrane. In terms of biological role, produces ATP from ADP in the presence of a proton gradient across the membrane. The polypeptide is ATP synthase epsilon chain (Psychrobacter arcticus (strain DSM 17307 / VKM B-2377 / 273-4)).